Here is a 100-residue protein sequence, read N- to C-terminus: Conantokin-G (100 aa).

An N-terminal signal peptide occupies residues 1–21 (MHLYTYLYLLVPLVTFHLILG). Positions 22 to 80 (TGTLDDGGALTERRSADATALKAEPVLLQKSAARSTDDNGKDRLTQMKRILKQRGNKAR) are excised as a propeptide. The interval 52–100 (SAARSTDDNGKDRLTQMKRILKQRGNKARGEEELQENQELIREKSNGKR) is disordered. Residues 56–66 (STDDNGKDRLT) show a composition bias toward basic and acidic residues. The interval 61-80 (GKDRLTQMKRILKQRGNKAR) is gamma-carboxylation recognition sequence that plays a role in the conversion of Glu to carboxy-Glu (Gla). Glu83 lines the a divalent metal cation pocket. Residues Glu83, Glu84, Glu87, Glu90, and Glu94 each carry the 4-carboxyglutamate modification. The a divalent metal cation site is built by Glu87, Glu90, and Glu94. Basic and acidic residues predominate over residues 90 to 100 (ELIREKSNGKR). Asparagine amide is present on Asn97.

Belongs to the conotoxin B superfamily. The cofactor is Ca(2+). Requires Mg(2+) as cofactor. As to expression, expressed by the venom duct.

The protein localises to the secreted. Conantokins inhibit N-methyl-D-aspartate (NMDA) receptors. This toxin is selective for the NR2B/GRIN2B subunit. Induces sleep-like symptoms in young mice and hyperactivity in older mice. The chain is Conantokin-G from Conus geographus (Geography cone).